Reading from the N-terminus, the 554-residue chain is HMG box-containing protein 4 (554 aa).

Disordered stretches follow at residues G15 to V368 and H417 to V469. Residues S75–A88 show a composition bias toward basic and acidic residues. Over residues S95 to A105 the composition is skewed to low complexity. Over residues T113 to H123 the composition is skewed to polar residues. Composition is skewed to basic and acidic residues over residues P145–G154 and L217–S226. Positions Y236–G251 are enriched in polar residues. A compositionally biased stretch (basic residues) spans M268 to K296. Over residues L313–P332 the composition is skewed to pro residues. Positions H341–K357 are enriched in basic and acidic residues. Residues K359–V427 constitute a DNA-binding region (HMG box). Low complexity-rich tracts occupy residues S433 to S445 and S454 to A467.

As to quaternary structure, interacts with nlk.2.

Its subcellular location is the nucleus. Its function is as follows. Negatively regulates Wnt/beta-catenin signaling during development. The protein is HMG box-containing protein 4 (hmgxb4) of Xenopus laevis (African clawed frog).